The following is a 132-amino-acid chain: Small ribosomal subunit protein uS8 (132 aa).

Belongs to the universal ribosomal protein uS8 family. In terms of assembly, part of the 30S ribosomal subunit. Contacts proteins S5 and S12.

One of the primary rRNA binding proteins, it binds directly to 16S rRNA central domain where it helps coordinate assembly of the platform of the 30S subunit. In Thermoanaerobacter pseudethanolicus (strain ATCC 33223 / 39E) (Clostridium thermohydrosulfuricum), this protein is Small ribosomal subunit protein uS8.